The following is a 500-amino-acid chain: Cytochrome P450 2D3 (500 aa).

Cysteine 446 is a binding site for heme.

This sequence belongs to the cytochrome P450 family. It depends on heme as a cofactor.

It localises to the endoplasmic reticulum membrane. The protein localises to the microsome membrane. The catalysed reaction is an organic molecule + reduced [NADPH--hemoprotein reductase] + O2 = an alcohol + oxidized [NADPH--hemoprotein reductase] + H2O + H(+). In terms of biological role, cytochromes P450 are a group of heme-thiolate monooxygenases. In liver microsomes, this enzyme is involved in an NADPH-dependent electron transport pathway. It oxidizes a variety of structurally unrelated compounds, including steroids, fatty acids, and xenobiotics. This Rattus norvegicus (Rat) protein is Cytochrome P450 2D3 (Cyp2d3).